The following is a 274-amino-acid chain: Nitrogenase iron protein (274 aa).

8–15 (GKGGIGKS) is a binding site for ATP. Cys94 lines the [4Fe-4S] cluster pocket. At Arg97 the chain carries ADP-ribosylarginine; by dinitrogenase reductase ADP-ribosyltransferase. A [4Fe-4S] cluster-binding site is contributed by Cys131.

It belongs to the NifH/BchL/ChlL family. As to quaternary structure, homodimer. The cofactor is [4Fe-4S] cluster. The reversible ADP-ribosylation of Arg-97 inactivates the nitrogenase reductase and regulates nitrogenase activity.

It carries out the reaction N2 + 8 reduced [2Fe-2S]-[ferredoxin] + 16 ATP + 16 H2O = H2 + 8 oxidized [2Fe-2S]-[ferredoxin] + 2 NH4(+) + 16 ADP + 16 phosphate + 6 H(+). Functionally, the key enzymatic reactions in nitrogen fixation are catalyzed by the nitrogenase complex, which has 2 components: the iron protein and the molybdenum-iron protein. This is Nitrogenase iron protein from Pelodictyon phaeoclathratiforme (strain DSM 5477 / BU-1).